The sequence spans 510 residues: Pyruvate kinase, cytosolic isozyme (510 aa).

Residue R50 coordinates substrate. Residues N52, S54, D84, and T85 each coordinate K(+). Residue 52 to 55 (NFSH) coordinates ATP. Residues R91 and K176 each contribute to the ATP site. E242 lines the Mg(2+) pocket. 3 residues coordinate substrate: G265, D266, and T298. D266 lines the Mg(2+) pocket.

Belongs to the pyruvate kinase family. As to quaternary structure, homotetramer. Mg(2+) is required as a cofactor. The cofactor is K(+).

The protein resides in the cytoplasm. The catalysed reaction is pyruvate + ATP = phosphoenolpyruvate + ADP + H(+). It participates in carbohydrate degradation; glycolysis; pyruvate from D-glyceraldehyde 3-phosphate: step 5/5. The protein is Pyruvate kinase, cytosolic isozyme of Solanum tuberosum (Potato).